We begin with the raw amino-acid sequence, 387 residues long: 3-ketoacyl-CoA thiolase (387 aa).

The active-site Acyl-thioester intermediate is the cysteine 91. Active-site proton acceptor residues include histidine 343 and cysteine 373.

Belongs to the thiolase-like superfamily. Thiolase family. As to quaternary structure, heterotetramer of two alpha chains (FadB) and two beta chains (FadA).

Its subcellular location is the cytoplasm. It catalyses the reaction an acyl-CoA + acetyl-CoA = a 3-oxoacyl-CoA + CoA. It participates in lipid metabolism; fatty acid beta-oxidation. Catalyzes the final step of fatty acid oxidation in which acetyl-CoA is released and the CoA ester of a fatty acid two carbons shorter is formed. This is 3-ketoacyl-CoA thiolase from Enterobacter sp. (strain 638).